Reading from the N-terminus, the 899-residue chain is Translation initiation factor IF-2 (899 aa).

2 disordered regions span residues 65-84 and 91-310; these read KTRS…SVQI and TYVK…SFNK. Polar residues predominate over residues 68 to 82; sequence STLNVPSTGGKSKSV. Basic and acidic residues predominate over residues 108–164; sequence QARREAEEQAQRAAEEQAKREAELREAAEKAKRAADEQAKREAAEKAKRDVAEKEKV. A compositionally biased stretch (polar residues) spans 165-174; that stretch reads TNQQNENMTK. Positions 177-236 are enriched in basic and acidic residues; that stretch reads QAEKAKREAEAAELKRKAEEAARLKVEEEARRIAEEARRMAEENAGRWEAESAKPEESAD. Residues 262 to 276 show a composition bias toward basic residues; that stretch reads SRSRAGKVTKQKKGN. Residues 277-290 are compositionally biased toward basic and acidic residues; that stretch reads RQSESKADREEARA. Positions 398-567 constitute a tr-type G domain; sequence ARAPVVTIMG…LLQAEVLELK (170 aa). Residues 407–414 form a G1 region; sequence GHVDHGKT. 407-414 serves as a coordination point for GTP; it reads GHVDHGKT. A G2 region spans residues 432–436; that stretch reads GITQH. The segment at 453–456 is G3; that stretch reads DTPG. GTP-binding positions include 453 to 457 and 507 to 510; these read DTPGH and NKID. Residues 507 to 510 are G4; that stretch reads NKID. The interval 543-545 is G5; sequence SAK.

This sequence belongs to the TRAFAC class translation factor GTPase superfamily. Classic translation factor GTPase family. IF-2 subfamily.

It is found in the cytoplasm. In terms of biological role, one of the essential components for the initiation of protein synthesis. Protects formylmethionyl-tRNA from spontaneous hydrolysis and promotes its binding to the 30S ribosomal subunits. Also involved in the hydrolysis of GTP during the formation of the 70S ribosomal complex. The polypeptide is Translation initiation factor IF-2 (Pectobacterium carotovorum subsp. carotovorum (strain PC1)).